The chain runs to 434 residues: Lecithin-cholesterol acyltransferase-like 1 (434 aa).

The Acyl-ester intermediate role is filled by Ser-191. Catalysis depends on charge relay system residues Asp-354 and His-386.

It belongs to the AB hydrolase superfamily. Lipase family.

In Oryza sativa subsp. japonica (Rice), this protein is Lecithin-cholesterol acyltransferase-like 1.